Consider the following 401-residue polypeptide: 8-amino-7-oxononanoate synthase (401 aa).

Residue Arg-24 coordinates substrate. 111–112 (GF) serves as a coordination point for pyridoxal 5'-phosphate. Substrate is bound at residue His-137. 3 residues coordinate pyridoxal 5'-phosphate: Ser-183, His-211, and Thr-240. Position 243 is an N6-(pyridoxal phosphate)lysine (Lys-243). Position 357 (Thr-357) interacts with substrate.

It belongs to the class-II pyridoxal-phosphate-dependent aminotransferase family. BioF subfamily. Homodimer. The cofactor is pyridoxal 5'-phosphate.

It carries out the reaction 6-carboxyhexanoyl-[ACP] + L-alanine + H(+) = (8S)-8-amino-7-oxononanoate + holo-[ACP] + CO2. It functions in the pathway cofactor biosynthesis; biotin biosynthesis. Catalyzes the decarboxylative condensation of pimeloyl-[acyl-carrier protein] and L-alanine to produce 8-amino-7-oxononanoate (AON), [acyl-carrier protein], and carbon dioxide. In Xylella fastidiosa (strain M23), this protein is 8-amino-7-oxononanoate synthase.